Consider the following 20-residue polypeptide: Cupiennin-6f (20 aa).

As to expression, expressed by the venom gland.

The protein resides in the secreted. This is Cupiennin-6f from Cupiennius salei (American wandering spider).